Reading from the N-terminus, the 82-residue chain is Small ribosomal subunit protein bS16 (82 aa).

It belongs to the bacterial ribosomal protein bS16 family.

This Saccharophagus degradans (strain 2-40 / ATCC 43961 / DSM 17024) protein is Small ribosomal subunit protein bS16.